We begin with the raw amino-acid sequence, 332 residues long: Hygromycin-B 7''-O-kinase (332 aa).

D223 (proton acceptor) is an active-site residue.

This sequence belongs to the aminoglycoside phosphotransferase family.

It catalyses the reaction hygromycin B + ATP = 7''-O-phosphohygromycin B + ADP + H(+). Functionally, the aminoglycoside phosphotransferases achieve inactivation of their antibiotic substrates by phosphorylation. This Streptomyces hygroscopicus protein is Hygromycin-B 7''-O-kinase (hyg).